A 202-amino-acid polypeptide reads, in one-letter code: Vitelline membrane outer layer protein 1 homolog (202 aa).

Positions 1–24 are cleaved as a signal peptide; it reads MERGAGAKLLPLLLLLRATGFTCA. 4 cysteine pairs are disulfide-bonded: Cys-53–Cys-86, Cys-114–Cys-146, Cys-169–Cys-199, and Cys-174–Cys-200.

This sequence belongs to the VMO1 family.

Its subcellular location is the secreted. The polypeptide is Vitelline membrane outer layer protein 1 homolog (VMO1) (Homo sapiens (Human)).